The chain runs to 550 residues: (+)-germacrene D synthase (550 aa).

Mg(2+) is bound by residues Asp304, Asp308, and Glu455. The DDXXD motif signature appears at 304-308 (DDIYD).

This sequence belongs to the terpene synthase family. Tpsa subfamily. It depends on Mg(2+) as a cofactor. The cofactor is Mn(2+). Co(2+) serves as cofactor. Ni(2+) is required as a cofactor.

It is found in the cytoplasm. It catalyses the reaction (2E,6E)-farnesyl diphosphate = (+)-germacrene D + diphosphate. It functions in the pathway secondary metabolite biosynthesis; terpenoid biosynthesis. Involved in the biosynthesis of germacrene D. Can use farnesyl diphosphate as substrate, but not geranyl diphosphate. Produces mainly (+)-germacrene D along with germacrene B and a number of minor by-products. The protein is (+)-germacrene D synthase of Zingiber officinale (Ginger).